A 252-amino-acid polypeptide reads, in one-letter code: MYRTISRSSSGLIRQSTARLTRQLSTTRTTPSQYNSKLLLGVLGTGALAFGYFSQQSSLIQNASTAENIEKVFEEGNAVAKDAQESLDARQEKVIKENEQKTKKAEDAKTSSESKANVADKKSNSQPEGEPEGEGKQEAAFNPDTGEINWDCPCLGGMAHGPCGEEFKEAFSCFVFSETEPKGIDCIKKFENMRSCFKRYPEHYKDELYDDGEEEASTEVVEHVVLETSEPAIEQIEQGIKEDKVKPNTKSD.

The transit peptide at 1–31 (MYRTISRSSSGLIRQSTARLTRQLSTTRTTP) directs the protein to the mitochondrion. The Mitochondrial matrix segment spans residues 32-37 (SQYNSK). The helical; Signal-anchor for type II membrane protein transmembrane segment at 38–54 (LLLGVLGTGALAFGYFS) threads the bilayer. At 55 to 252 (QQSSLIQNAS…DKVKPNTKSD (198 aa)) the chain is on the mitochondrial intermembrane side. The segment covering 90-123 (RQEKVIKENEQKTKKAEDAKTSSESKANVADKKS) has biased composition (basic and acidic residues). Residues 90–143 (RQEKVIKENEQKTKKAEDAKTSSESKANVADKKSNSQPEGEPEGEGKQEAAFNP) form a disordered region. Disulfide bonds link cysteine 152–cysteine 154, cysteine 163–cysteine 196, and cysteine 173–cysteine 186. Residues 160-204 (HGPCGEEFKEAFSCFVFSETEPKGIDCIKKFENMRSCFKRYPEHY) enclose the CHCH domain. 2 short sequence motifs (cx9C motif) span residues 163–173 (CGEEFKEAFSC) and 186–196 (CIKKFENMRSC). The tract at residues 230–252 (EPAIEQIEQGIKEDKVKPNTKSD) is disordered. Positions 239–252 (GIKEDKVKPNTKSD) are enriched in basic and acidic residues.

In terms of assembly, monomer. The cofactor is Cu(2+). Requires Zn(2+) as cofactor.

The protein localises to the mitochondrion inner membrane. Required for the import and folding of small cysteine-containing proteins (small Tim) in the mitochondrial intermembrane space (IMS). Forms a redox cycle with ERV1 that involves a disulfide relay system. Precursor proteins to be imported into the IMS are translocated in their reduced form into the mitochondria. The oxidized form of MIA40 forms a transient intermolecular disulfide bridge with the reduced precursor protein, resulting in oxidation of the precursor protein that now contains an intramolecular disulfide bond and is able to undergo folding in the IMS. The sequence is that of Mitochondrial intermembrane space import and assembly protein 40 (MIA40) from Candida albicans (strain SC5314 / ATCC MYA-2876) (Yeast).